The following is a 72-amino-acid chain: Translation initiation factor IF-1 (72 aa).

Positions 1-72 constitute an S1-like domain; sequence MSKEGKITLK…TRGRIIYRIS (72 aa).

It belongs to the IF-1 family. Component of the 30S ribosomal translation pre-initiation complex which assembles on the 30S ribosome in the order IF-2 and IF-3, IF-1 and N-formylmethionyl-tRNA(fMet); mRNA recruitment can occur at any time during PIC assembly.

Its subcellular location is the cytoplasm. One of the essential components for the initiation of protein synthesis. Stabilizes the binding of IF-2 and IF-3 on the 30S subunit to which N-formylmethionyl-tRNA(fMet) subsequently binds. Helps modulate mRNA selection, yielding the 30S pre-initiation complex (PIC). Upon addition of the 50S ribosomal subunit IF-1, IF-2 and IF-3 are released leaving the mature 70S translation initiation complex. The polypeptide is Translation initiation factor IF-1 (Malacoplasma penetrans (strain HF-2) (Mycoplasma penetrans)).